Reading from the N-terminus, the 222-residue chain is Uracil-DNA glycosylase (222 aa).

Aspartate 66 acts as the Proton acceptor in catalysis.

The protein belongs to the uracil-DNA glycosylase (UDG) superfamily. UNG family.

The protein localises to the cytoplasm. The enzyme catalyses Hydrolyzes single-stranded DNA or mismatched double-stranded DNA and polynucleotides, releasing free uracil.. In terms of biological role, excises uracil residues from the DNA which can arise as a result of misincorporation of dUMP residues by DNA polymerase or due to deamination of cytosine. In Porphyromonas gingivalis (strain ATCC BAA-308 / W83), this protein is Uracil-DNA glycosylase.